Reading from the N-terminus, the 144-residue chain is Large ribosomal subunit protein uL14 (144 aa).

This sequence belongs to the universal ribosomal protein uL14 family. In terms of assembly, part of the 50S ribosomal subunit. Forms a cluster with proteins L3 and L24e, part of which may contact the 16S rRNA in 2 intersubunit bridges.

Its function is as follows. Binds to 23S rRNA. Forms part of two intersubunit bridges in the 70S ribosome. The chain is Large ribosomal subunit protein uL14 from Pyrobaculum islandicum (strain DSM 4184 / JCM 9189 / GEO3).